Consider the following 141-residue polypeptide: uncharacterized protein (141 aa).

The tract at residues 1 to 101 (FRGRAPRPLV…PDPGRSRRAT (101 aa)) is disordered. Over residues 27-70 (QVRDCGREGDLRAGKAADRRLPRARETCSRFGEGVRQKDVHKGP) the composition is skewed to basic and acidic residues.

This is an uncharacterized protein from Dhori virus (strain Indian/1313/61) (Dho).